The sequence spans 529 residues: MTQQDPAAAAPRPVLVVDFGAQYAQLIARRVREVNLYSEVIPHTMPADEVAAKNPAALILSGGPSSVYADDAPSLHPELLELGVPVFGICYGFQAMTQAMGGTVAKTGLREYGRTELQIQSEAGVLHEGMGESQQVWMSHGDSVSEAPEGFTVTARTEGAPVAAFECPEKRMAGVQYHPEVLHSPKGQEVLRRFLLETAGLEPTWTAGNIAEQLIEQVREQIGDEGRAICGLSGGVDSAVAAALVQRAIGDRLTCVFVDHGLLRAGEREQVEKDFVAATGAKLVTVDEREAFLQKLAGVTEPEAKRKAIGAEFIRSFERAVAGVLADAPEGSSVDFLVQGTLYPDVVESGGGTGTANIKSHHNVGGLPDDVEFELVEPLRLLFKDEVRAVGRELGLPEEIVARQPFPGPGLGIRIIGEVTEDRLETLRAADAIARAELTAAGLDDVIWQCPVVLLADVRSVGVQGDGRTYGHPIVLRPVSSEDAMTADWTRIPFDVLEKISTRITNEVEEVNRVVLDVTSKPPGTIEWE.

The Glutamine amidotransferase type-1 domain occupies 13-204; the sequence is PVLVVDFGAQ…LLETAGLEPT (192 aa). The active-site Nucleophile is the Cys90. Active-site residues include His178 and Glu180. The 199-residue stretch at 205–403 folds into the GMPS ATP-PPase domain; the sequence is WTAGNIAEQL…LGLPEEIVAR (199 aa). 233 to 239 lines the ATP pocket; that stretch reads SGGVDSA.

Homodimer.

The enzyme catalyses XMP + L-glutamine + ATP + H2O = GMP + L-glutamate + AMP + diphosphate + 2 H(+). Its pathway is purine metabolism; GMP biosynthesis; GMP from XMP (L-Gln route): step 1/1. Its function is as follows. Catalyzes the synthesis of GMP from XMP. This is GMP synthase [glutamine-hydrolyzing] from Corynebacterium jeikeium (strain K411).